A 102-amino-acid chain; its full sequence is UPF0473 protein SERP1179 (102 aa).

Belongs to the UPF0473 family.

This Staphylococcus epidermidis (strain ATCC 35984 / DSM 28319 / BCRC 17069 / CCUG 31568 / BM 3577 / RP62A) protein is UPF0473 protein SERP1179.